The chain runs to 113 residues: Hydrogenase maturation factor HybF (113 aa).

Positions 2 and 3 each coordinate Ni(2+). The Zn(2+) site is built by cysteine 73, cysteine 76, cysteine 89, and cysteine 92.

Belongs to the HypA/HybF family. HybF subfamily.

Involved in the maturation of [NiFe] hydrogenases. Required for nickel insertion into the metal center of the hydrogenase. In Escherichia coli O6:H1 (strain CFT073 / ATCC 700928 / UPEC), this protein is Hydrogenase maturation factor HybF.